Consider the following 300-residue polypeptide: Hemagglutinin 1 (300 aa).

Residues 200–221 (FIFATVVFIFLQAGRVPEIIAD) form a helical membrane-spanning segment.

Its subcellular location is the cell membrane. Functionally, induces agglutination of neuraminidase-treated erythrocytes. This is Hemagglutinin 1 (hag1) from Eikenella corrodens.